Reading from the N-terminus, the 663-residue chain is Transketolase 2 (663 aa).

A substrate-binding site is contributed by histidine 25. Thiamine diphosphate is bound by residues histidine 65 and 113-115 (GPL). Aspartate 154 contacts Mg(2+). 2 residues coordinate thiamine diphosphate: glycine 155 and asparagine 184. Mg(2+)-binding residues include asparagine 184 and isoleucine 186. Substrate contacts are provided by histidine 259, arginine 356, and serine 383. Residue histidine 259 coordinates thiamine diphosphate. The Proton donor role is filled by glutamate 410. Phenylalanine 436 contributes to the thiamine diphosphate binding site. Positions 460, 468, and 519 each coordinate substrate.

Belongs to the transketolase family. Homodimer. Mg(2+) serves as cofactor. Ca(2+) is required as a cofactor. The cofactor is Mn(2+). It depends on Co(2+) as a cofactor. Requires thiamine diphosphate as cofactor.

The enzyme catalyses D-sedoheptulose 7-phosphate + D-glyceraldehyde 3-phosphate = aldehydo-D-ribose 5-phosphate + D-xylulose 5-phosphate. Its function is as follows. Catalyzes the transfer of a two-carbon ketol group from a ketose donor to an aldose acceptor, via a covalent intermediate with the cofactor thiamine pyrophosphate. The sequence is that of Transketolase 2 (tkt2) from Vibrio parahaemolyticus serotype O3:K6 (strain RIMD 2210633).